The following is a 234-amino-acid chain: Endonuclease V (234 aa).

Positions 46 and 116 each coordinate Mg(2+).

Belongs to the endonuclease V family. The cofactor is Mg(2+).

The protein localises to the cytoplasm. The catalysed reaction is Endonucleolytic cleavage at apurinic or apyrimidinic sites to products with a 5'-phosphate.. Functionally, DNA repair enzyme involved in the repair of deaminated bases. Selectively cleaves double-stranded DNA at the second phosphodiester bond 3' to a deoxyinosine leaving behind the intact lesion on the nicked DNA. The protein is Endonuclease V of Clostridium acetobutylicum (strain ATCC 824 / DSM 792 / JCM 1419 / IAM 19013 / LMG 5710 / NBRC 13948 / NRRL B-527 / VKM B-1787 / 2291 / W).